The chain runs to 163 residues: Large ribosomal subunit protein uL15 (163 aa).

Positions 1–29 are enriched in basic residues; the sequence is MSKKRRQRGSRTHGGGSHKNRRGAGHRGG. 2 disordered regions span residues 1–59 and 135–163; these read MSKK…KTRR and VADG…DEES. Composition is skewed to basic and acidic residues over residues 33 to 46 and 142 to 154; these read AGRD…HEPL and LSER…AEKD.

It belongs to the universal ribosomal protein uL15 family. As to quaternary structure, part of the 50S ribosomal subunit.

Binds to the 23S rRNA. The sequence is that of Large ribosomal subunit protein uL15 from Natronomonas pharaonis (strain ATCC 35678 / DSM 2160 / CIP 103997 / JCM 8858 / NBRC 14720 / NCIMB 2260 / Gabara) (Halobacterium pharaonis).